Here is a 203-residue protein sequence, read N- to C-terminus: Cytochrome c biogenesis CcmF N-terminal-like mitochondrial protein 2 (203 aa).

A run of 2 helical transmembrane segments spans residues 44 to 64 (IWIL…SWWA) and 143 to 163 (IFLW…FYQM).

The protein belongs to the CcmF/CycK/Ccl1/NrfE/CcsA family. In terms of assembly, interacts with CCMFC, CCMFN1, CCMH and CYTC-1.

The protein resides in the mitochondrion inner membrane. Functionally, forms a complex with CCMFC, CCMFN1 and CCMH that performs the assembly of heme with c-type apocytochromes in mitochondria. This chain is Cytochrome c biogenesis CcmF N-terminal-like mitochondrial protein 2, found in Arabidopsis thaliana (Mouse-ear cress).